Here is a 249-residue protein sequence, read N- to C-terminus: Diaminopimelate epimerase (249 aa).

2 residues coordinate substrate: Asn11 and Asn60. Cys69 (proton donor) is an active-site residue. Substrate contacts are provided by residues 70–71 (GN), Asn164, and 182–183 (ER). The active-site Proton acceptor is the Cys192. Residue 193–194 (GT) participates in substrate binding.

It belongs to the diaminopimelate epimerase family. As to quaternary structure, homodimer.

The protein localises to the cytoplasm. It carries out the reaction (2S,6S)-2,6-diaminopimelate = meso-2,6-diaminopimelate. Its pathway is amino-acid biosynthesis; L-lysine biosynthesis via DAP pathway; DL-2,6-diaminopimelate from LL-2,6-diaminopimelate: step 1/1. Functionally, catalyzes the stereoinversion of LL-2,6-diaminopimelate (L,L-DAP) to meso-diaminopimelate (meso-DAP), a precursor of L-lysine and an essential component of the bacterial peptidoglycan. The protein is Diaminopimelate epimerase of Campylobacter lari (strain RM2100 / D67 / ATCC BAA-1060).